Here is a 496-residue protein sequence, read N- to C-terminus: Nucleolar and spindle-associated protein 1-B (496 aa).

3 disordered regions span residues Tyr-44–His-206, Thr-250–Asn-294, and Lys-338–Lys-496. Residues Gly-56–Ser-69 show a composition bias toward polar residues. The span at Thr-121–Val-134 shows a compositional bias: basic and acidic residues. The span at Gln-150–Glu-159 shows a compositional bias: polar residues. A compositionally biased stretch (low complexity) spans Ser-261–Pro-281. Composition is skewed to polar residues over residues Asn-376 to Asn-396 and Ala-403 to Leu-423. Residues Ser-447–Asn-459 show a composition bias toward low complexity. Residues Thr-467–Gln-485 are compositionally biased toward basic and acidic residues.

This sequence belongs to the NUSAP family. Interacts with DNA, microtubules, ipo7, kpna2 and kpnb1. Microtubule stabilization is inhibited by ipo7 and kpna2, while microtubule bundling is inhibited by kpnb1. Active GTP-bound ran causes dissociation of ipo7 and kpnb1.

The protein localises to the cytoplasm. It localises to the nucleus. Its subcellular location is the cytoskeleton. It is found in the spindle. Microtubule-associated protein with the capacity to bundle and stabilize microtubules. May associate with chromosomes and promote the organization of meiotic or mitotic spindle microtubules around them. The chain is Nucleolar and spindle-associated protein 1-B (nusap1-b) from Xenopus laevis (African clawed frog).